The chain runs to 148 residues: Macrodomain Ter protein (148 aa).

It belongs to the MatP family. In terms of assembly, homodimer.

It is found in the cytoplasm. Its function is as follows. Required for spatial organization of the terminus region of the chromosome (Ter macrodomain) during the cell cycle. Prevents early segregation of duplicated Ter macrodomains during cell division. Binds specifically to matS, which is a 13 bp signature motif repeated within the Ter macrodomain. This chain is Macrodomain Ter protein, found in Haemophilus ducreyi (strain 35000HP / ATCC 700724).